Here is a 98-residue protein sequence, read N- to C-terminus: NADH-ubiquinone oxidoreductase chain 4L (98 aa).

Transmembrane regions (helical) follow at residues 1–21, 29–49, and 61–81; these read MTLI…GLLM, ALLC…LTIL, and IILL…LVMV.

Belongs to the complex I subunit 4L family. Core subunit of respiratory chain NADH dehydrogenase (Complex I) which is composed of 45 different subunits.

It localises to the mitochondrion inner membrane. It catalyses the reaction a ubiquinone + NADH + 5 H(+)(in) = a ubiquinol + NAD(+) + 4 H(+)(out). Functionally, core subunit of the mitochondrial membrane respiratory chain NADH dehydrogenase (Complex I) which catalyzes electron transfer from NADH through the respiratory chain, using ubiquinone as an electron acceptor. Part of the enzyme membrane arm which is embedded in the lipid bilayer and involved in proton translocation. This Balaenoptera bonaerensis (Antarctic minke whale) protein is NADH-ubiquinone oxidoreductase chain 4L (MT-ND4L).